A 355-amino-acid chain; its full sequence is tRNA N6-adenosine threonylcarbamoyltransferase (355 aa).

Residues histidine 113 and histidine 117 each contribute to the Fe cation site. Residues 135–139 (LASGG), aspartate 168, glycine 181, and asparagine 279 each bind substrate. Aspartate 307 is a Fe cation binding site.

This sequence belongs to the KAE1 / TsaD family. Requires Fe(2+) as cofactor.

The protein localises to the cytoplasm. It carries out the reaction L-threonylcarbamoyladenylate + adenosine(37) in tRNA = N(6)-L-threonylcarbamoyladenosine(37) in tRNA + AMP + H(+). In terms of biological role, required for the formation of a threonylcarbamoyl group on adenosine at position 37 (t(6)A37) in tRNAs that read codons beginning with adenine. Is involved in the transfer of the threonylcarbamoyl moiety of threonylcarbamoyl-AMP (TC-AMP) to the N6 group of A37, together with TsaE and TsaB. TsaD likely plays a direct catalytic role in this reaction. In Bradyrhizobium sp. (strain BTAi1 / ATCC BAA-1182), this protein is tRNA N6-adenosine threonylcarbamoyltransferase.